We begin with the raw amino-acid sequence, 388 residues long: MMISDLPHDLESEILSRVPAKSLAKWKTTCKRWYALFRDPSFVKKNFDKAGGREMIVLMNSRVYSNSVNLQGINNRFDPSMEVTGKLIKLNDSKGVDISAIFHCDGLILCTTTESTGLVVWNPCTGEIRCIKPRIFYRCNDRYALGYGNSKSSCHSYKILRSCCYYVDQNLSLMAAEFEIYDFSTDSWRDLGDITRDMIVYSSGVSLKGNTYWVSGSKEKGFFMRYFDFSKEVFGRLPLPYQSFNANHTAALSAVGNEKIAVLQQKILAMSDEMRIWVTNKIDEAKDLSWSNFLLTVDYGKFNLPCLVNVTSFLLDEENKVAVCSDVDTKDGLRSRIYIVGKDFYKEVFKDTRGSDNNWPLLLCYVPSLVSIQENIPNKAEENEIKGG.

The F-box domain occupies 1-50 (MMISDLPHDLESEILSRVPAKSLAKWKTTCKRWYALFRDPSFVKKNFDKA). Kelch repeat units follow at residues 163–208 (CCYY…VSLK) and 336–383 (RIYI…AEEN).

The sequence is that of F-box/kelch-repeat protein At3g17530 from Arabidopsis thaliana (Mouse-ear cress).